The primary structure comprises 757 residues: Alcohol dehydrogenase (quinone), dehydrogenase subunit (757 aa).

Residues 1-34 (MTSGLLTPIKVTKKRLLSCAAALAFSAAVPVAFA) form the signal peptide. Gln35 is subject to Pyrrolidone carboxylic acid. Position 95 (Glu95) interacts with pyrroloquinoline quinone. The cysteines at positions 141 and 142 are disulfide-linked. Arg147 is a binding site for pyrroloquinoline quinone. Glu215 is a binding site for Ca(2+). Thr277 lines the pyrroloquinoline quinone pocket. Residues Asn297 and Asp342 each contribute to the Ca(2+) site. Asp342 serves as the catalytic Proton acceptor. Residues Lys369 and Ile588 each contribute to the pyrroloquinoline quinone site. Positions 640–719 (ARQKDGYFMY…DIRNFIVKRA (80 aa)) constitute a Cytochrome c domain. Heme c-binding residues include Cys653, Cys656, His657, and Met696. The disordered stretch occupies residues 726–757 (EVKARENSTGVPNDQFLNVPQSTADVPTADHP). The segment covering 732–750 (NSTGVPNDQFLNVPQSTAD) has biased composition (polar residues).

It belongs to the bacterial PQQ dehydrogenase family. The alcohol dehydrogenase multicomponent enzyme system is composed of a dehydrogenase subunit I (AdhA), a cytochrome c subunit II (AdhB) and a subunit III (AdhS). The cofactor is pyrroloquinoline quinone. It depends on Ca(2+) as a cofactor. Requires heme c as cofactor.

Its subcellular location is the cell membrane. It carries out the reaction ethanol + a ubiquinone = a ubiquinol + acetaldehyde. With respect to regulation, 2,6-dichloro-4-dicyanovinylphenol (PC16) and antimycin A inhibit ubiquinol oxidation activity more selectively than the ubiquinone reductase activity. Its function is as follows. Dehydrogenase component of the alcohol dehydrogenase multicomponent enzyme system which is involved in the production of acetic acid and in the ethanol oxidase respiratory chain. Quinohemoprotein alcohol dehydrogenase (ADH) catalyzes the oxidation of ethanol to acetaldehyde by transferring electrons to the ubiquinone embedded in the membrane phospholipids. The electrons transfer from ethanol to membranous ubiquinone occurs from pyrroloquinoline quinone (PQQ) to one heme c in subunit I (AdhA), and finally to two heme c in subunit II (AdhB). Besides ubiquinone reduction, ADH also has a ubiquinol (QH2) oxidation reaction which mediates electron transfer from ubiquinol to the non-energy generating bypass oxidase system. The electrons transfer occurs from ubiquinol (QH2) to the additional heme c within subunit II (AdhB). Also able to use quinone analogs such as 2,3-dimethoxy-5-methyl-6-n-decyl-1,4-benzoquinone (DB) and 2,3-dimethoxy-5-methyl-6-n-pentyl-1,4-benzoquinone (PB). This is Alcohol dehydrogenase (quinone), dehydrogenase subunit from Gluconobacter oxydans (strain 621H) (Gluconobacter suboxydans).